Here is a 343-residue protein sequence, read N- to C-terminus: L-rhamnose-proton symporter (343 aa).

A run of 10 helical transmembrane segments spans residues 4–24, 38–58, 68–88, 101–121, 137–157, 175–195, 207–227, 254–274, 289–309, and 320–340; these read AIILGIIWHLVGAASAACFYA, WSIGGLVSWLILPWTVSYLLL, FSIATLLPVFLFGAMWGIGNI, MGIGIAIGITLIIGTLMTPIL, TLLGVFVALIGVAIVSYAGLL, LILAVMCGIFSAGMSFAMDAA, INSLYVALPSYVIIMGGGAII, LLITNILFSALAGLMWYLQFF, MSWMLHMSFYVLCGGIVGLLL, and VAVLCIGCLVIILAANIVGLG.

The protein belongs to the L-rhamnose transporter (TC 2.A.7.6) family.

It localises to the cell inner membrane. The enzyme catalyses L-rhamnopyranose(in) + H(+)(in) = L-rhamnopyranose(out) + H(+)(out). In terms of biological role, uptake of L-rhamnose across the cytoplasmic membrane with the concomitant transport of protons into the cell (symport system). The polypeptide is L-rhamnose-proton symporter (Yersinia pestis bv. Antiqua (strain Antiqua)).